Reading from the N-terminus, the 384-residue chain is Organic solute transporter alpha-like protein 1 (384 aa).

The Extracellular portion of the chain corresponds to 1–38 (MEIVKTIIPHNRSYIEPPIPSATEWLANMSVMHVSCLT). N-linked (GlcNAc...) asparagine glycans are attached at residues asparagine 11 and asparagine 28. A helical transmembrane segment spans residues 39-59 (IACVFVAITFLSSFFHLFFVL). Residues 60-70 (KYVSNERIRND) lie on the Cytoplasmic side of the membrane. A helical transmembrane segment spans residues 71-91 (MYALIFMFPITTFASLVGMFI). The Extracellular segment spans residues 92–93 (PR). A helical transmembrane segment spans residues 94–114 (AAIFLYAVSLVYFMFTLFIMV). Residues 115-165 (TLLFNIFGGRQEMSAYLLQRNIRVNFTVPPLCFFKFLPTVESTDQNLRRIE) are Cytoplasmic-facing. A helical transmembrane segment spans residues 166–186 (WLVFQTPIIRTLLELVSVVVS). Topologically, residues 187–202 (MEQEGRRESVWFVFSQ) are extracellular. A helical membrane pass occupies residues 203 to 223 (LMALLSMCIAFYGCYVMVPLG). Residues 224–240 (REKHAPYRFDFLFRTCD) lie on the Cytoplasmic side of the membrane. The helical transmembrane segment at 241–261 (IAQCIYTIQKFVFEFAAAVGL) threads the bilayer. Topologically, residues 262 to 273 (ITSDRYLPAAAK) are extracellular. Residues 274–294 (ALWWASFMCTWEMMLLSALCS) form a helical membrane-spanning segment. Topologically, residues 295-384 (YCLRPAKCKF…FDSLSQIQGQ (90 aa)) are cytoplasmic.

It belongs to the OST-alpha family.

It localises to the cell membrane. Its function is as follows. Probable transporter. In Caenorhabditis elegans, this protein is Organic solute transporter alpha-like protein 1 (osta-1).